The following is an 884-amino-acid chain: Protein translocase subunit SecA (884 aa).

Residues Gln88, 106–110 (GEGKT), and Asp509 contribute to the ATP site. Residues 822-884 (EQKKLKMSGA…PKKGLFANND (63 aa)) are disordered. The span at 833-842 (KGGEDLEETK) shows a compositional bias: basic and acidic residues. Cys858, Cys860, Cys869, and His870 together coordinate Zn(2+).

It belongs to the SecA family. As to quaternary structure, monomer and homodimer. Part of the essential Sec protein translocation apparatus which comprises SecA, SecYEG and auxiliary proteins SecDF-YajC and YidC. The cofactor is Zn(2+).

It localises to the cell inner membrane. The protein localises to the cytoplasm. It carries out the reaction ATP + H2O + cellular proteinSide 1 = ADP + phosphate + cellular proteinSide 2.. Part of the Sec protein translocase complex. Interacts with the SecYEG preprotein conducting channel. Has a central role in coupling the hydrolysis of ATP to the transfer of proteins into and across the cell membrane, serving as an ATP-driven molecular motor driving the stepwise translocation of polypeptide chains across the membrane. The protein is Protein translocase subunit SecA of Campylobacter hominis (strain ATCC BAA-381 / DSM 21671 / CCUG 45161 / LMG 19568 / NCTC 13146 / CH001A).